The following is a 235-amino-acid chain: Flavonoid 3',5'-methyltransferase (235 aa).

Residues Val-51, Glu-73, 75-76 (GV), Ser-81, Asp-99, and Ala-128 contribute to the S-adenosyl-L-methionine site. Asp-151 contacts a divalent metal cation. Residue Asp-153 participates in S-adenosyl-L-methionine binding. A divalent metal cation-binding residues include Asp-177 and Asn-178.

Belongs to the class I-like SAM-binding methyltransferase superfamily. Cation-dependent O-methyltransferase family. CCoAMT subfamily. A divalent metal cation serves as cofactor.

Its subcellular location is the cytoplasm. It catalyses the reaction S-adenosyl-L-methionine + a 3'-hydroxyflavonoid = S-adenosyl-L-homocysteine + a 3'-methoxyflavonoid.. The catalysed reaction is S-adenosyl-L-methionine + a 5'-hydroxy-3'-methoxyflavonoid = S-adenosyl-L-homocysteine + a 3',5'-dimethoxyflavonoid.. Its pathway is pigment biosynthesis; anthocyanin biosynthesis. In terms of biological role, mediates O-methylation of anthocyanins. Anthocyanins are major pigments in grapes: at ripening initiation in red grapevine berries, the exocarp turns color from green to red and then to purple due to the accumulation and extent of methylation of anthocyanins. Catalyzes both 3' and 5' O-methylation of anthocyanins, with a preference for glycosylated substrates. Active on both anthocyanins and flavonols in vitro. Most active with delphinidin 3-glucoside but also acts on cyanidin 3-glucoside, cyanidin, myricetin, quercetin and quercetin 3-glucoside. Not able to methylate flavan type skeletons with chiral centers, such as catechins or dihydroquercetin. This chain is Flavonoid 3',5'-methyltransferase (FAOMT), found in Vitis vinifera (Grape).